We begin with the raw amino-acid sequence, 563 residues long: Sulfite reductase [NADPH] hemoprotein beta-component (563 aa).

The [4Fe-4S] cluster site is built by Cys-427, Cys-433, Cys-472, and Cys-476. Cys-476 lines the siroheme pocket.

This sequence belongs to the nitrite and sulfite reductase 4Fe-4S domain family. In terms of assembly, alpha(8)-beta(8). The alpha component is a flavoprotein, the beta component is a hemoprotein. It depends on siroheme as a cofactor. Requires [4Fe-4S] cluster as cofactor.

It catalyses the reaction hydrogen sulfide + 3 NADP(+) + 3 H2O = sulfite + 3 NADPH + 4 H(+). It functions in the pathway sulfur metabolism; hydrogen sulfide biosynthesis; hydrogen sulfide from sulfite (NADPH route): step 1/1. Its function is as follows. Component of the sulfite reductase complex that catalyzes the 6-electron reduction of sulfite to sulfide. This is one of several activities required for the biosynthesis of L-cysteine from sulfate. This chain is Sulfite reductase [NADPH] hemoprotein beta-component, found in Shewanella frigidimarina (strain NCIMB 400).